The sequence spans 414 residues: Tryptophan synthase beta chain (414 aa).

The span at 1 to 12 (MVSTISRHDQNK) shows a compositional bias: basic and acidic residues. The segment at 1 to 23 (MVSTISRHDQNKNNDYLNQPSKE) is disordered. Lys109 carries the post-translational modification N6-(pyridoxal phosphate)lysine.

Belongs to the TrpB family. In terms of assembly, tetramer of two alpha and two beta chains. Requires pyridoxal 5'-phosphate as cofactor.

It carries out the reaction (1S,2R)-1-C-(indol-3-yl)glycerol 3-phosphate + L-serine = D-glyceraldehyde 3-phosphate + L-tryptophan + H2O. It participates in amino-acid biosynthesis; L-tryptophan biosynthesis; L-tryptophan from chorismate: step 5/5. The beta subunit is responsible for the synthesis of L-tryptophan from indole and L-serine. The polypeptide is Tryptophan synthase beta chain (Prochlorococcus marinus (strain MIT 9515)).